We begin with the raw amino-acid sequence, 239 residues long: Putative CRISPR-associated endoribonuclease-like protein Cas6nc (239 aa).

Belongs to the CRISPR-associated protein Cas6/Cse3/CasE family. Monomer; homodimer when crystallized in the presence of crRNA. Varying the crRNA sequence varies degree of oligomerization and structure.

CRISPR (clustered regularly interspaced short palindromic repeat), is an adaptive immune system that provides protection against mobile genetic elements (viruses, transposable elements and conjugative plasmids). CRISPR clusters contain sequences complementary to antecedent mobile elements and target invading nucleic acids. CRISPR clusters are transcribed and processed into CRISPR RNA (crRNA), also called psiRNA (prokaryotic silencing) in this organism (Potential). The sequence is that of Putative CRISPR-associated endoribonuclease-like protein Cas6nc (cas6nc) from Pyrococcus horikoshii (strain ATCC 700860 / DSM 12428 / JCM 9974 / NBRC 100139 / OT-3).